The chain runs to 235 residues: Urease accessory protein UreF (235 aa).

Belongs to the UreF family. In terms of assembly, ureD, UreF and UreG form a complex that acts as a GTP-hydrolysis-dependent molecular chaperone, activating the urease apoprotein by helping to assemble the nickel containing metallocenter of UreC. The UreE protein probably delivers the nickel.

It is found in the cytoplasm. Required for maturation of urease via the functional incorporation of the urease nickel metallocenter. The chain is Urease accessory protein UreF from Haemophilus influenzae (strain PittEE).